The following is a 485-amino-acid chain: MADILRRLTNSERCRLLQDKLDDWYKDYHINSCDSNLNVCCELLELNSKVQGQLFKILSVTAQEGGQYAGVETIKSRFLPWLGTCFSTASPGSFSENSFVTLNESMERKLSTSHERELNEVESKLSSTRIELNSVRQELLETQMDLEDTKTKSANTLLATEEEILQLRAELRAAREKLELRSLDSIDEYERQIRLLKDEISILSSESSILKSRLSRSRSPSPIRHSSRSSSPFARSESPTSAKLTSASRQARLISRFNDIFANDRLDAQTLLRRYIQDLDMVQRIIFIATVESFHSAKMAFRQFRLRVCKSLSPSHMGPESLEDAVIDYIVGNLDLYDVQSSVNEVISAMNVNPKISFPPEVDFILISGFIQEVCRVAFTMQTLDPPLDIAFTVDGELFTDSKYRRTYDSEHTAPLVYYHVWPALMENDNVIVKGEAVTKRGALWNSIRSRSRSASPLRSHSDSPGHNLTRSRSPSPRRSGTPRF.

Residues 112 to 210 (TSHERELNEV…SILSSESSIL (99 aa)) adopt a coiled-coil conformation. 2 stretches are compositionally biased toward low complexity: residues 214 to 241 (LSRS…SPTS) and 471 to 485 (RSRS…TPRF). 2 disordered regions span residues 214–244 (LSRS…SAKL) and 451–485 (RSRS…TPRF).

It belongs to the MIEAP family.

It localises to the cytoplasm. Its subcellular location is the mitochondrion outer membrane. It is found in the mitochondrion matrix. Functionally, key regulator of mitochondrial quality that mediates the repairing or degradation of unhealthy mitochondria in response to mitochondrial damage. Mediator of mitochondrial protein catabolic process (also named MALM) by mediating the degradation of damaged proteins inside mitochondria by promoting the accumulation in the mitochondrial matrix of hydrolases that are characteristic of the lysosomal lumen. Also involved in mitochondrion degradation of damaged mitochondria by promoting the formation of vacuole-like structures (named MIV), which engulf and degrade unhealthy mitochondria by accumulating lysosomes. Binds cardiolipin. May form molecular condensates (non-membrane-bounded organelles) within mitochondria that compartmentalize and promote cardiolipin metabolism. The protein is Mitochondria-eating protein (spata18) of Xenopus laevis (African clawed frog).